Consider the following 612-residue polypeptide: Zinc metalloproteinase-disintegrin-like HV1 (612 aa).

Positions 1–20 are cleaved as a signal peptide; the sequence is MIQVLLVTICLAVFPYQGSS. Residues 21–188 constitute a propeptide that is removed on maturation; the sequence is IILESGNVND…SIKEDSQSNL (168 aa). In terms of domain architecture, Peptidase M12B spans 200–396; the sequence is KYVKFFLVAD…NMPQCILKKP (197 aa). Residue Asn-219 is glycosylated (N-linked (GlcNAc...) asparagine). Cystine bridges form between Cys-311–Cys-391, Cys-351–Cys-375, and Cys-353–Cys-358. His-336 lines the Zn(2+) pocket. Glu-337 is a catalytic residue. Zn(2+)-binding residues include His-340 and His-346. Residues 404–489 form the Disintegrin domain; that stretch reads PPVCGNYFVE…AECTDRFQRN (86 aa). Residues Val-406, Asn-409, Phe-411, Glu-413, Glu-416, and Asp-419 each contribute to the Ca(2+) site. 14 disulfides stabilise this stretch: Cys-407-Cys-436, Cys-418-Cys-431, Cys-420-Cys-426, Cys-430-Cys-453, Cys-444-Cys-450, Cys-449-Cys-475, Cys-462-Cys-482, Cys-469-Cys-500, Cys-493-Cys-505, Cys-512-Cys-562, Cys-527-Cys-573, Cys-540-Cys-550, Cys-557-Cys-599, and Cys-593-Cys-605. Residues 468–470 carry the D/ECD-tripeptide motif; sequence ECD. Ca(2+)-binding residues include Asp-470, Met-471, Asp-473, Asp-484, and Arg-485. Asn-502 carries an N-linked (GlcNAc...) asparagine glycan. N-linked (GlcNAc...) asparagine glycosylation occurs at Asn-609.

It belongs to the venom metalloproteinase (M12B) family. P-III subfamily. P-IIIc sub-subfamily. In terms of assembly, homodimer; disulfide-linked. Zn(2+) serves as cofactor. As to expression, expressed by the venom gland.

It is found in the secreted. Inhibited by EDTA and EGTA. Functionally, snake venom zinc metalloproteinase-disintegrin-like that potently activates prothrombin (F2). Does not elicit any hemorrhagic response. Barely inhibits collagen-induced platelet aggregation. Hydrolyzes the alpha-chain of fibrin and fibrinogen (FGA), without affecting the Bbeta- and gamma-chains. Induces apoptosis in cultured vascular endothelial cells. The sequence is that of Zinc metalloproteinase-disintegrin-like HV1 from Protobothrops flavoviridis (Habu).